The following is a 247-amino-acid chain: ATP synthase subunit a, chloroplastic (247 aa).

5 consecutive transmembrane segments (helical) span residues 38–58 (QVLITSWVVIAILLGSAALAV), 95–115 (VPFIGTMFLFIFVSNWSGALL), 134–154 (INTTVALALLTSVAYFYAGLT), 199–219 (LVVVVLVSLVPSVVPIPVMFL), and 220–240 (GLFTSGIQALIFATLAAAYIG).

Belongs to the ATPase A chain family. F-type ATPases have 2 components, CF(1) - the catalytic core - and CF(0) - the membrane proton channel. CF(1) has five subunits: alpha(3), beta(3), gamma(1), delta(1), epsilon(1). CF(0) has four main subunits: a, b, b' and c.

The protein localises to the plastid. It is found in the chloroplast thylakoid membrane. Its function is as follows. Key component of the proton channel; it plays a direct role in the translocation of protons across the membrane. In Helianthus annuus (Common sunflower), this protein is ATP synthase subunit a, chloroplastic.